Reading from the N-terminus, the 399-residue chain is Glutamyl-tRNA reductase (399 aa).

Substrate contacts are provided by residues 45-48, S93, 98-100, and Q104; these read TCNR and EDQ. Catalysis depends on C46, which acts as the Nucleophile. 173–178 is an NADP(+) binding site; it reads GAGKMG.

This sequence belongs to the glutamyl-tRNA reductase family. Homodimer.

The catalysed reaction is (S)-4-amino-5-oxopentanoate + tRNA(Glu) + NADP(+) = L-glutamyl-tRNA(Glu) + NADPH + H(+). Its pathway is porphyrin-containing compound metabolism; protoporphyrin-IX biosynthesis; 5-aminolevulinate from L-glutamyl-tRNA(Glu): step 1/2. Functionally, catalyzes the NADPH-dependent reduction of glutamyl-tRNA(Glu) to glutamate 1-semialdehyde (GSA). This Methanobrevibacter smithii (strain ATCC 35061 / DSM 861 / OCM 144 / PS) protein is Glutamyl-tRNA reductase.